The chain runs to 563 residues: 5-aminolevulinate synthase, mitochondrial (563 aa).

The transit peptide at 1–18 (MESLVRQSKKLCPYIGRT) directs the protein to the mitochondrion. Substrate-binding residues include arginine 137, serine 251, and lysine 270. Residues serine 303, histidine 331, and threonine 373 each coordinate pyridoxal 5'-phosphate. Lysine 376 is a catalytic residue. Lysine 376 is subject to N6-(pyridoxal phosphate)lysine. The pyridoxal 5'-phosphate site is built by threonine 405 and threonine 406. Threonine 491 is a substrate binding site.

The protein belongs to the class-II pyridoxal-phosphate-dependent aminotransferase family. In terms of assembly, homodimer. It depends on pyridoxal 5'-phosphate as a cofactor.

The protein localises to the mitochondrion matrix. It catalyses the reaction succinyl-CoA + glycine + H(+) = 5-aminolevulinate + CO2 + CoA. The protein operates within porphyrin-containing compound metabolism; protoporphyrin-IX biosynthesis; 5-aminolevulinate from glycine: step 1/1. Its function is as follows. Catalyzes the synthesis of 5-aminolevulinate (ALA) from succinyl-CoA and glycine, the first and rate-limiting step in heme biosynthesis. This is 5-aminolevulinate synthase, mitochondrial (HEM1) from Yarrowia lipolytica (strain CLIB 122 / E 150) (Yeast).